The chain runs to 258 residues: Venom plasminogen activator (258 aa).

Residues 1-18 (MVLIRVLANLLILQLSYA) form the signal peptide. The propeptide occupies 19-24 (QKSSEL). A Peptidase S1 domain is found at 25–249 (VVGGDECNIN…YTDWIQSIIS (225 aa)). Disulfide bonds link C31–C163, C50–C66, C98–C256, C142–C210, C174–C189, and C200–C225. An N-linked (GlcNAc...) asparagine glycan is attached at N44. Catalysis depends on charge relay system residues H65 and D110. The active-site Charge relay system is the S204.

Belongs to the peptidase S1 family. Snake venom subfamily. In terms of assembly, monomer. Expressed by the venom gland.

It is found in the secreted. Functionally, snake venom serine protease that activates plasminogen. Shows a preferential cleavage at Arg-|-Xaa instead of Lys-|-Xaa bonds. In Agkistrodon piscivorus leucostoma (Western cottonmouth), this protein is Venom plasminogen activator.